The sequence spans 105 residues: Iron-sulfur cluster assembly protein CyaY (105 aa).

Belongs to the frataxin family.

In terms of biological role, involved in iron-sulfur (Fe-S) cluster assembly. May act as a regulator of Fe-S biogenesis. This chain is Iron-sulfur cluster assembly protein CyaY, found in Dechloromonas aromatica (strain RCB).